The sequence spans 617 residues: DNA mismatch repair protein MutL (617 aa).

The disordered stretch occupies residues 363 to 394 (YAPAYGARPPQPSAWSVDTSPHRPLDDGQNRF). A compositionally biased stretch (basic and acidic residues) spans 382 to 392 (SPHRPLDDGQN).

This sequence belongs to the DNA mismatch repair MutL/HexB family.

In terms of biological role, this protein is involved in the repair of mismatches in DNA. It is required for dam-dependent methyl-directed DNA mismatch repair. May act as a 'molecular matchmaker', a protein that promotes the formation of a stable complex between two or more DNA-binding proteins in an ATP-dependent manner without itself being part of a final effector complex. This is DNA mismatch repair protein MutL from Allorhizobium ampelinum (strain ATCC BAA-846 / DSM 112012 / S4) (Agrobacterium vitis (strain S4)).